A 49-amino-acid polypeptide reads, in one-letter code: Disintegrin echistatin-gamma (49 aa).

The Disintegrin domain maps to 1–47 (DCASGPCCRDCKFLEEGTICNMARGDDMDDYCNGKTCDCPRNPHKWP). 4 disulfides stabilise this stretch: Cys2-Cys11, Cys7-Cys32, Cys8-Cys37, and Cys20-Cys39. The short motif at 24–26 (RGD) is the Cell attachment site element.

Belongs to the venom metalloproteinase (M12B) family. P-II subfamily. P-IIa sub-subfamily. Monomer. In terms of tissue distribution, expressed by the venom gland.

Its subcellular location is the secreted. Has antiplatelet activities on guinea pig, followed by human, rabbit and rat platelet-rich plasma. The protein is Disintegrin echistatin-gamma of Echis pyramidum leakeyi (Leakey's carpet viper).